The sequence spans 465 residues: Gamma-aminobutyric acid receptor subunit gamma-1 (465 aa).

An N-terminal signal peptide occupies residues 1–20 (MGSGKVFLFSPSLLWSQTRG). Topologically, residues 21-273 (VRLIFLLLTL…FDLSRRMGYF (253 aa)) are extracellular. N-linked (GlcNAc...) asparagine glycans are attached at residues N50 and N127. Residues C188 and C202 are joined by a disulfide bond. N245 carries an N-linked (GlcNAc...) asparagine glycan. Residues 274 to 294 (TIQTYIPCILTVVLSWVSFWI) form a helical membrane-spanning segment. Topologically, residues 295–300 (NKDAVP) are cytoplasmic. A helical transmembrane segment spans residues 301-320 (ARTSLGITTVLTMTTLSTIA). The Extracellular portion of the chain corresponds to 321–328 (RKSLPKVS). The helical transmembrane segment at 329–349 (YVTAMDLFVSVCFIFVFAALM) threads the bilayer. Residues 350–444 (EYGTLHYFTS…RIAKIDSYSR (95 aa)) are Cytoplasmic-facing. The helical transmembrane segment at 445–465 (IFFPTAFALFNLVYWVGYLYL) threads the bilayer.

The protein belongs to the ligand-gated ion channel (TC 1.A.9) family. Gamma-aminobutyric acid receptor (TC 1.A.9.5) subfamily. GABRG1 sub-subfamily. As to quaternary structure, heteropentamer, formed by a combination of alpha (GABRA1-6), beta (GABRB1-3), gamma (GABRG1-3), delta (GABRD), epsilon (GABRE), rho (GABRR1-3), pi (GABRP) and theta (GABRQ) chains, each subunit exhibiting distinct physiological and pharmacological properties. Post-translationally, may be palmitoylated. As to expression, expressed in brain.

The protein resides in the postsynaptic cell membrane. It localises to the cell membrane. The catalysed reaction is chloride(in) = chloride(out). Its function is as follows. Gamma subunit of the heteropentameric ligand-gated chloride channel gated by gamma-aminobutyric acid (GABA), a major inhibitory neurotransmitter in the brain. GABA-gated chloride channels, also named GABA(A) receptors (GABAAR), consist of five subunits arranged around a central pore and contain GABA active binding site(s) located at the alpha and beta subunit interface(s). When activated by GABA, GABAARs selectively allow the flow of chloride anions across the cell membrane down their electrochemical gradient. Chloride influx into the postsynaptic neuron following GABAAR opening decreases the neuron ability to generate a new action potential, thereby reducing nerve transmission. This is Gamma-aminobutyric acid receptor subunit gamma-1 from Rattus norvegicus (Rat).